A 181-amino-acid chain; its full sequence is Adenylate kinase (181 aa).

ATP is bound at residue 10–15; sequence GAGKGT. The tract at residues 30 to 59 is NMP; the sequence is STGELFRKNIQDGTKLGVEAKRYLDAGDLV. Residues threonine 31, arginine 36, 57 to 59, 85 to 88, and glutamine 92 contribute to the AMP site; these read DLV and GYPR. The LID stretch occupies residues 126 to 132; that stretch reads GRGRADD. Residue arginine 127 coordinates ATP. 2 residues coordinate AMP: arginine 129 and arginine 140. Glycine 166 is an ATP binding site.

The protein belongs to the adenylate kinase family. Monomer.

The protein localises to the cytoplasm. It catalyses the reaction AMP + ATP = 2 ADP. Its pathway is purine metabolism; AMP biosynthesis via salvage pathway; AMP from ADP: step 1/1. Functionally, catalyzes the reversible transfer of the terminal phosphate group between ATP and AMP. Plays an important role in cellular energy homeostasis and in adenine nucleotide metabolism. This chain is Adenylate kinase, found in Mycobacterium ulcerans (strain Agy99).